The sequence spans 107 residues: Snaclec VP12 subunit A (107 aa).

Intrachain disulfides connect C4–C15 and C32–C107. Residues 11–107 (YEGNCYKAFD…ECGLAYPFIC (97 aa)) enclose the C-type lectin domain.

This sequence belongs to the snaclec family. In terms of assembly, heterodimer of subunits alpha and beta; disulfide-linked. In terms of tissue distribution, expressed by the venom gland.

It is found in the secreted. In terms of biological role, inhibits integrin alpha-2/beta-1- (ITGA2/ITGB1) dependent melanoma metastasis. This chain is Snaclec VP12 subunit A, found in Daboia palaestinae (Palestine viper).